A 401-amino-acid chain; its full sequence is Succinyl-diaminopimelate desuccinylase (401 aa).

Histidine 71 contacts Zn(2+). Aspartate 73 is a catalytic residue. Aspartate 104 contributes to the Zn(2+) binding site. The active-site Proton acceptor is glutamate 138. The Zn(2+) site is built by glutamate 139, glutamate 167, and histidine 352.

This sequence belongs to the peptidase M20A family. DapE subfamily. Homodimer. Zn(2+) is required as a cofactor. Co(2+) serves as cofactor.

The enzyme catalyses N-succinyl-(2S,6S)-2,6-diaminopimelate + H2O = (2S,6S)-2,6-diaminopimelate + succinate. Its pathway is amino-acid biosynthesis; L-lysine biosynthesis via DAP pathway; LL-2,6-diaminopimelate from (S)-tetrahydrodipicolinate (succinylase route): step 3/3. Its function is as follows. Catalyzes the hydrolysis of N-succinyl-L,L-diaminopimelic acid (SDAP), forming succinate and LL-2,6-diaminopimelate (DAP), an intermediate involved in the bacterial biosynthesis of lysine and meso-diaminopimelic acid, an essential component of bacterial cell walls. The chain is Succinyl-diaminopimelate desuccinylase from Wolbachia sp. subsp. Brugia malayi (strain TRS).